Consider the following 281-residue polypeptide: Acidic leucine-rich nuclear phosphoprotein 32-related protein (281 aa).

4 LRR repeats span residues 29-52, 56-78, 79-103, and 105-128; these read YESL…EKEL, FKNL…IPSI, ATLN…IVQN, and PNIK…TLKE. An LRRCT domain is found at 140-178; the sequence is NPFADNPNYRKELFEFLPNVKIIDCYNKEGMEVLSSDEE. The segment covering 197-244 has biased composition (acidic residues); sequence FKDEDDEDEEFVPNDNEDDDEDDELDDDLEDEDMEDLDKEDLDKEDYD. The disordered stretch occupies residues 197–281; that stretch reads FKDEDDEDEE…DMDLKKTKLE (85 aa). The span at 245–266 shows a compositional bias: basic and acidic residues; the sequence is IDTKETEGVNKDEKSNKRKQDA.

It belongs to the ANP32 family.

The protein is Acidic leucine-rich nuclear phosphoprotein 32-related protein of Plasmodium falciparum (isolate 3D7).